The chain runs to 352 residues: Staphylococcal superantigen-like 3 (352 aa).

Positions 1–30 (MKMRTIAKTSLALGLLTTGAITVTTQSVKA) are cleaved as a signal peptide. The interval 61-165 (ATTQAANTRQ…TIKQAQTDMT (105 aa)) is disordered. Residues 69–104 (RQERTPKLEKAPNTNEEKTSASKIEKISQPKQEEQK) are compositionally biased toward basic and acidic residues. Positions 114–141 (PKQEQSQTTTESTTPKTKVTTPPSTNTP) are enriched in low complexity. The span at 142–164 (QPMQSTKSDTPQSPTIKQAQTDM) shows a compositional bias: polar residues. The sialyl Lewis X-binding stretch occupies residues 228–326 (IDVFIVLEDN…VIKMKNGGKY (99 aa)).

It belongs to the staphylococcal/streptococcal toxin family. In terms of assembly, interacts with host TLR2 (via its extracellular domain).

It is found in the secreted. Functionally, secreted protein that plays an essential role in immune innate response inhibition by interacting with and inhibiting host TLR2. In turn, bacteria recognition by immune cells is impaired and cytokine production is inhibited. Mechanistically, by interacting with TLR2, blocks ligand binding and thus inhibits activation. Second, by interacting with an already formed TLR2-lipopeptide complex, prevents TLR heterodimerization and downstream signaling. The interaction with host TLR2 does not involve sialyl Lewis X interactions. The sequence is that of Staphylococcal superantigen-like 3 from Staphylococcus aureus (strain Newman).